The following is a 476-amino-acid chain: Glutamate--tRNA ligase (476 aa).

The short motif at 9–19 (PSPTGTLHLGT) is the 'HIGH' region element. The 'KMSKS' region motif lies at 248–252 (KLSKR). Lys-251 serves as a coordination point for ATP.

This sequence belongs to the class-I aminoacyl-tRNA synthetase family. Glutamate--tRNA ligase type 1 subfamily. Monomer.

The protein resides in the cytoplasm. It carries out the reaction tRNA(Glu) + L-glutamate + ATP = L-glutamyl-tRNA(Glu) + AMP + diphosphate. Functionally, catalyzes the attachment of glutamate to tRNA(Glu) in a two-step reaction: glutamate is first activated by ATP to form Glu-AMP and then transferred to the acceptor end of tRNA(Glu). This chain is Glutamate--tRNA ligase, found in Prochlorococcus marinus (strain NATL2A).